Reading from the N-terminus, the 418-residue chain is Tyrosine--tRNA ligase (418 aa).

Tyr34 is a binding site for L-tyrosine. The 'HIGH' region motif lies at 39-48; that stretch reads PTADSLHLGH. Residues Tyr169 and Gln173 each contribute to the L-tyrosine site. Residues 229 to 233 carry the 'KMSKS' region motif; the sequence is KFGKS. Position 232 (Lys232) interacts with ATP. The S4 RNA-binding domain maps to 352-418; that stretch reads LNLVDMLVTA…GKKKYAVLTY (67 aa).

This sequence belongs to the class-I aminoacyl-tRNA synthetase family. TyrS type 1 subfamily. Homodimer.

The protein resides in the cytoplasm. It carries out the reaction tRNA(Tyr) + L-tyrosine + ATP = L-tyrosyl-tRNA(Tyr) + AMP + diphosphate + H(+). Catalyzes the attachment of tyrosine to tRNA(Tyr) in a two-step reaction: tyrosine is first activated by ATP to form Tyr-AMP and then transferred to the acceptor end of tRNA(Tyr). The protein is Tyrosine--tRNA ligase of Streptococcus pyogenes serotype M28 (strain MGAS6180).